We begin with the raw amino-acid sequence, 316 residues long: Pantothenate kinase (316 aa).

ATP is bound at residue 95–102 (GSVAVGKS).

Belongs to the prokaryotic pantothenate kinase family.

The protein localises to the cytoplasm. It carries out the reaction (R)-pantothenate + ATP = (R)-4'-phosphopantothenate + ADP + H(+). It functions in the pathway cofactor biosynthesis; coenzyme A biosynthesis; CoA from (R)-pantothenate: step 1/5. In Photorhabdus laumondii subsp. laumondii (strain DSM 15139 / CIP 105565 / TT01) (Photorhabdus luminescens subsp. laumondii), this protein is Pantothenate kinase.